The primary structure comprises 58 residues: Metallothionein-1 (58 aa).

The beta stretch occupies residues Pro1–Ser28. The a divalent metal cation site is built by Cys4, Cys5, Cys9, Cys11, Cys16, Cys20, Cys22, Cys25, Cys27, Cys30, Cys33, Cys37, Cys39, Cys45, Cys49, Cys53, Cys55, and Cys56. The interval Pro29–Thr58 is alpha.

It belongs to the metallothionein superfamily. Type 3 family.

Metallothioneins have a high content of cysteine residues that bind various heavy metals. Class I MTS in marine crustacea are involved in the sequestration of elevated levels of heavy-metal ions. The protein is Metallothionein-1 of Scylla serrata (Mud crab).